A 514-amino-acid polypeptide reads, in one-letter code: Maltose/maltodextrin transport system permease protein MalF (514 aa).

Over 1-16 (MDVIKKKHWWQSDALK) the chain is Cytoplasmic. The helical transmembrane segment at 17-36 (WSVLGLLGLLVGYLVVLMYA) threads the bilayer. Residues 37 to 39 (QGE) are Periplasmic-facing. A helical transmembrane segment spans residues 40-58 (YLFAITTLILSSAGLYIFA). Residues 59–66 (NRKAYAWR) are Cytoplasmic-facing. Residues 67–92 (YVYPGMAGMGLFVLFPLVCTIAIAFT) form a helical membrane-spanning segment. At 93–275 (NYSSTNQLTF…RVFTDEGIQK (183 aa)) the chain is on the periplasmic side. The chain crosses the membrane as a helical span at residues 276–306 (PFLAIFVWTVVFSLITVFLTVAVGMVLACLV). The ABC transmembrane type-1 domain occupies 281–505 (FVWTVVFSLI…LLVGALAIVN (225 aa)). At 307–318 (QWEALRGKAVYR) the chain is on the cytoplasmic side. A helical membrane pass occupies residues 319-336 (VLLILPYAVPSFISILIF). The Periplasmic portion of the chain corresponds to 337-369 (KGLFNQSFGEINMMLSALFGVKPAWFSDPTTAR). Residues 370–392 (TMLIIVNTWLGYPYMMILCMGLL) traverse the membrane as a helical segment. Residues 393–425 (KAIPDDLYEASAMDGAGPFQNFFKITLPLLIKP) lie on the Cytoplasmic side of the membrane. A helical transmembrane segment spans residues 426–452 (LTPLMIASFAFNFNNFVLIQLLTNGGP). The Periplasmic portion of the chain corresponds to 453–483 (DRLGTTTPAGYTDLLVNYTYRIAFEGGGGQD). A helical transmembrane segment spans residues 484-505 (FGLAAAIATLIFLLVGALAIVN). The Cytoplasmic segment spans residues 506–514 (LKATRMKFD).

The protein belongs to the binding-protein-dependent transport system permease family. MalFG subfamily. In terms of assembly, the complex is composed of two ATP-binding proteins (MalK), two transmembrane proteins (MalG and MalF) and a solute-binding protein (MalE). Protein stability and stable complex formation require YidC.

The protein localises to the cell inner membrane. Its function is as follows. Part of the ABC transporter complex MalEFGK involved in maltose/maltodextrin import. Probably responsible for the translocation of the substrate across the membrane. This is Maltose/maltodextrin transport system permease protein MalF from Escherichia coli (strain K12).